A 469-amino-acid chain; its full sequence is MSTQLQTWDFLPISMNLQGRECLVVGDTEQAVRKTDLLLRAGAKVRLLGDPHAKALKESADALNAITVIPDPFHPDLLQLCAVVVAASDSAMLNQQVAQAAQARGIPVNVVEQPELSSFIFPSIIDRHPVLVSVTSSGGAPVLTRLLRNRLESLIPHGFGRLADLAMEFRDKVRSRFGHINQRRRFWESVLEGVVSDLVFCGRTDKARAMLDDMLSGEQADAIKDTGEVYLVGAGPGDPDLLTFRALRLMRQADVVLYDRLVSPQILDLVRRDAKRINVGKARSNHTLPQQEINAMLVELAKEGKRVLRLKGGDPFIFGRGGEEIDQLADAGVPFQVVPGITAASGCAAYSGIPLTHRDHSQSVRFVTGHLKSDTCDLPWHEFVQDNQTLVFYMGLVGLPIISRELIAHGMKPSTPIALVSRGTLPDQQVLVGELGNIAKKVEEQQIPGPTIIIIGDVVTLRDRLRWMD.

Residues 1–211 form a precorrin-2 dehydrogenase /sirohydrochlorin ferrochelatase region; it reads MSTQLQTWDF…GRTDKARAML (211 aa). Residues 29–30 and 50–51 contribute to the NAD(+) site; these read EQ and DP. Phosphoserine is present on Ser-136. A uroporphyrinogen-III C-methyltransferase region spans residues 227–469; that stretch reads GEVYLVGAGP…TLRDRLRWMD (243 aa). Pro-236 contacts S-adenosyl-L-methionine. Asp-259 acts as the Proton acceptor in catalysis. Lys-281 serves as the catalytic Proton donor. Residues 312–314, Ile-317, 342–343, Met-394, and Gly-423 contribute to the S-adenosyl-L-methionine site; these read GGD and TA.

This sequence in the N-terminal section; belongs to the precorrin-2 dehydrogenase / sirohydrochlorin ferrochelatase family. It in the C-terminal section; belongs to the precorrin methyltransferase family.

The enzyme catalyses uroporphyrinogen III + 2 S-adenosyl-L-methionine = precorrin-2 + 2 S-adenosyl-L-homocysteine + H(+). The catalysed reaction is precorrin-2 + NAD(+) = sirohydrochlorin + NADH + 2 H(+). It carries out the reaction siroheme + 2 H(+) = sirohydrochlorin + Fe(2+). The protein operates within cofactor biosynthesis; adenosylcobalamin biosynthesis; precorrin-2 from uroporphyrinogen III: step 1/1. It participates in cofactor biosynthesis; adenosylcobalamin biosynthesis; sirohydrochlorin from precorrin-2: step 1/1. It functions in the pathway porphyrin-containing compound metabolism; siroheme biosynthesis; precorrin-2 from uroporphyrinogen III: step 1/1. Its pathway is porphyrin-containing compound metabolism; siroheme biosynthesis; siroheme from sirohydrochlorin: step 1/1. The protein operates within porphyrin-containing compound metabolism; siroheme biosynthesis; sirohydrochlorin from precorrin-2: step 1/1. Its function is as follows. Multifunctional enzyme that catalyzes the SAM-dependent methylations of uroporphyrinogen III at position C-2 and C-7 to form precorrin-2 via precorrin-1. Then it catalyzes the NAD-dependent ring dehydrogenation of precorrin-2 to yield sirohydrochlorin. Finally, it catalyzes the ferrochelation of sirohydrochlorin to yield siroheme. This is Siroheme synthase from Hahella chejuensis (strain KCTC 2396).